The primary structure comprises 325 residues: Protease HtpX homolog 2 (325 aa).

Helical transmembrane passes span 10 to 30 (LNMALATLGITLLGFALALAV) and 41 to 61 (VGLILSILIFIFFLNIIQWLF). His147 provides a ligand contact to Zn(2+). Glu148 is a catalytic residue. His151 lines the Zn(2+) pocket. Helical transmembrane passes span 159–179 (LLMAVGLIPALIYYLGWWLFW) and 196–216 (LVFLLGIIMMAVSFVFQLLVL). Glu223 provides a ligand contact to Zn(2+).

Belongs to the peptidase M48B family. Zn(2+) is required as a cofactor.

The protein localises to the cell membrane. This is Protease HtpX homolog 2 from Saccharolobus solfataricus (strain ATCC 35092 / DSM 1617 / JCM 11322 / P2) (Sulfolobus solfataricus).